We begin with the raw amino-acid sequence, 140 residues long: Trafficking protein particle complex subunit 2-like protein (140 aa).

It belongs to the TRAPP small subunits family. Sedlin subfamily.

The chain is Trafficking protein particle complex subunit 2-like protein (trappc2l) from Dictyostelium discoideum (Social amoeba).